Here is a 54-residue protein sequence, read N- to C-terminus: Large ribosomal subunit protein bL33A (54 aa).

This sequence belongs to the bacterial ribosomal protein bL33 family.

The sequence is that of Large ribosomal subunit protein bL33A from Mesoplasma florum (strain ATCC 33453 / NBRC 100688 / NCTC 11704 / L1) (Acholeplasma florum).